Here is a 208-residue protein sequence, read N- to C-terminus: Small ribosomal subunit protein uS3 (208 aa).

Positions 16–85 (IDEYFKKELS…KPQIDVKPVE (70 aa)) constitute a KH type-2 domain.

The protein belongs to the universal ribosomal protein uS3 family. In terms of assembly, part of the 30S ribosomal subunit.

Its function is as follows. Binds the lower part of the 30S subunit head. The chain is Small ribosomal subunit protein uS3 from Methanocaldococcus jannaschii (strain ATCC 43067 / DSM 2661 / JAL-1 / JCM 10045 / NBRC 100440) (Methanococcus jannaschii).